The following is a 660-amino-acid chain: Probable E3 ubiquitin ligase complex SCF subunit sconB (660 aa).

Residues 1–13 show a composition bias toward basic and acidic residues; that stretch reads MHNENSVLRDAKE. 2 disordered regions span residues 1–34 and 86–108; these read MHNENSVLRDAKESLFNPTPRKQGLPEDNTMTPY and LGTGISKSAGPPPRPDLKCRRQA. The region spanning 175–221 is the F-box domain; the sequence is IDFITALPPEISFKILSYLDTASLCRAAQVSRGWKCLADDDVVWHRM. 7 WD repeats span residues 340–379, 381–419, 421–457, 459–500, 542–586, 587–626, and 629–660; these read GHTNGVMCLQFEDNILATGSYDTTIKIWDMETGEELRTLT, HTSGIRCLQFDETKLISGSIDRTLKVWNWRTGECISTYT, HLGGIIGLHFQNSILASGSTDKTVKIWNFEDKSTFLL, GHSD…RTFQ, SQVS…CLRT, FFGHLEGVWALSADTLRIVSGAEDRMVKIWDPRTGKCERT, and GHSGPVTCVGLGDSCFVTGSEDCEVRIYSFKN. The disordered stretch occupies residues 521 to 553; it reads GHDASHEEDSNASVSGDESPSSQVSCSPTAAFF. Positions 531–548 are enriched in polar residues; sequence NASVSGDESPSSQVSCSP.

This sequence belongs to the WD repeat MET30/SCONB/SCON-2 family. In terms of assembly, component of the SCF(sconB) E3 ubiquitin ligase complex.

It functions in the pathway protein modification; protein ubiquitination. Functionally, component of the SCF(sconB) E3 ubiquitin ligase complex involved in the regulation of sulfur metabolite repression, probably by mediating the inactivation or degradation of the metR transcription factor. The protein is Probable E3 ubiquitin ligase complex SCF subunit sconB (sconB) of Talaromyces marneffei (strain ATCC 18224 / CBS 334.59 / QM 7333) (Penicillium marneffei).